The chain runs to 738 residues: Phosphoribosylformylglycinamidine synthase subunit PurL (738 aa).

The active site involves His41. Positions 44 and 83 each coordinate ATP. Residue Glu85 coordinates Mg(2+). Residues 86-89 and Arg108 each bind substrate; that span reads SHNH. His87 functions as the Proton acceptor in the catalytic mechanism. A Mg(2+)-binding site is contributed by Asp109. Gln233 provides a ligand contact to substrate. Mg(2+) is bound at residue Asp261. Substrate is bound at residue 305–307; it reads ESQ. ATP contacts are provided by Asp490 and Gly527. Asn528 is a Mg(2+) binding site. Ser530 is a binding site for substrate.

The protein belongs to the FGAMS family. Monomer. Part of the FGAM synthase complex composed of 1 PurL, 1 PurQ and 2 PurS subunits.

Its subcellular location is the cytoplasm. It catalyses the reaction N(2)-formyl-N(1)-(5-phospho-beta-D-ribosyl)glycinamide + L-glutamine + ATP + H2O = 2-formamido-N(1)-(5-O-phospho-beta-D-ribosyl)acetamidine + L-glutamate + ADP + phosphate + H(+). The protein operates within purine metabolism; IMP biosynthesis via de novo pathway; 5-amino-1-(5-phospho-D-ribosyl)imidazole from N(2)-formyl-N(1)-(5-phospho-D-ribosyl)glycinamide: step 1/2. In terms of biological role, part of the phosphoribosylformylglycinamidine synthase complex involved in the purines biosynthetic pathway. Catalyzes the ATP-dependent conversion of formylglycinamide ribonucleotide (FGAR) and glutamine to yield formylglycinamidine ribonucleotide (FGAM) and glutamate. The FGAM synthase complex is composed of three subunits. PurQ produces an ammonia molecule by converting glutamine to glutamate. PurL transfers the ammonia molecule to FGAR to form FGAM in an ATP-dependent manner. PurS interacts with PurQ and PurL and is thought to assist in the transfer of the ammonia molecule from PurQ to PurL. The chain is Phosphoribosylformylglycinamidine synthase subunit PurL from Alkaliphilus metalliredigens (strain QYMF).